The chain runs to 540 residues: Phosphoenolpyruvate carboxykinase (ATP) (540 aa).

Arginine 65 provides a ligand contact to substrate. Lysine 87 is modified (N6-acetyllysine). Substrate-binding residues include tyrosine 207 and lysine 213. Residues lysine 213, histidine 232, and 248–256 (GLSGTGKTT) each bind ATP. Residues lysine 213 and histidine 232 each coordinate Mn(2+). Aspartate 269 contributes to the Mn(2+) binding site. ATP contacts are provided by residues glutamate 297, arginine 333, 449-450 (RI), and threonine 455. Arginine 333 provides a ligand contact to substrate. Lysine 523 is modified (N6-acetyllysine).

This sequence belongs to the phosphoenolpyruvate carboxykinase (ATP) family. In terms of assembly, monomer. Mn(2+) serves as cofactor.

The protein resides in the cytoplasm. It catalyses the reaction oxaloacetate + ATP = phosphoenolpyruvate + ADP + CO2. It participates in carbohydrate biosynthesis; gluconeogenesis. Functionally, involved in the gluconeogenesis. Catalyzes the conversion of oxaloacetate (OAA) to phosphoenolpyruvate (PEP) through direct phosphoryl transfer between the nucleoside triphosphate and OAA. The polypeptide is Phosphoenolpyruvate carboxykinase (ATP) (Escherichia coli O45:K1 (strain S88 / ExPEC)).